The following is a 76-amino-acid chain: Signal recognition particle 9 kDa protein (76 aa).

This sequence belongs to the SRP9 family. As to quaternary structure, heterodimer with SRP14; binds RNA as heterodimer. Component of a signal recognition particle complex that consists of a 7SL RNA molecule of 300 nucleotides and six protein subunits: srpa-72, srpa-68, SRP54, F37F2.2/SRP19, F25G6.8/SRP14 and ZK512.4/SRP9.

The protein resides in the cytoplasm. Component of the signal recognition particle (SRP) complex, a ribonucleoprotein complex that mediates the cotranslational targeting of secretory and membrane proteins to the endoplasmic reticulum (ER). SRP9 together with SRP14 and the Alu portion of the SRP RNA, constitutes the elongation arrest domain of SRP. The complex of SRP9 and SRP14 is required for SRP RNA binding. The sequence is that of Signal recognition particle 9 kDa protein from Caenorhabditis elegans.